The primary structure comprises 809 residues: MNIKKEFIKVISMSCLVTAITLSGPVFIPLVQGAGGHGDVGMHVKEKEKNKDENKRKDEERNKTQEEHLKEIMKHIVKIEVKGEEAVKKEAAEKLLEKVPSDVLEMYKAIGGKIYIVDGDITKHISLEALSEDKKKIKDIYGKDALLHEHYVYAKEGYEPVLVIQSSEDYVENTEKALNVYYEIGKILSRDILSKINQPYQKFLDVLNTIKNASDSDGQDLLFTNQLKEHPTDFSVEFLEQNSNEVQEVFAKAFAYYIEPQHRDVLQLYAPEAFNYMDKFNEQEINLSLEELKDQRMLARYEKWEKIKQHYQHWSDSLSEEGRGLLKKLQIPIEPKKDDIIHSLSQEEKELLKRIQIDSSDFLSTEEKEFLKKLQIDIRDSLSEEEKELLNRIQVDSSNPLSEKEKEFLKKLKLDIQPYDINQRLQDTGGLIDSPSINLDVRKQYKRDIQNIDALLHQSIGSTLYNKIYLYENMNINNLTATLGADLVDSTDNTKINRGIFNEFKKNFKYSISSNYMIVDINERPALDNERLKWRIQLSPDTRAGYLENGKLILQRNIGLEIKDVQIIKQSEKEYIRIDAKVVPKSKIDTKIQEAQLNINQEWNKALGLPKYTKLITFNVHNRYASNIVESAYLILNEWKNNIQSDLIKKVTNYLVDGNGRFVFTDITLPNIAEQYTHQDEIYEQVHSKGLYVPESRSILLHGPSKGVELRNDSEGFIHEFGHAVDDYAGYLLDKNQSDLVTNSKKFIDIFKEEGSNLTSYGRTNEAEFFAEAFRLMHSTDHAERLKVQKNAPKTFQFINDQIKFIINS.

The first 33 residues, 1–33, serve as a signal peptide directing secretion; it reads MNIKKEFIKVISMSCLVTAITLSGPVFIPLVQG. Residues 39-66 form a disordered region; the sequence is DVGMHVKEKEKNKDENKRKDEERNKTQE. Over residues 40 to 66 the composition is skewed to basic and acidic residues; sequence VGMHVKEKEKNKDENKRKDEERNKTQE. An i; PA-binding region region spans residues 60 to 295; it reads ERNKTQEEHL…NLSLEELKDQ (236 aa). One can recognise an ATLF-like 1 domain in the interval 70–282; that stretch reads KEIMKHIVKI…AFNYMDKFNE (213 aa). Positions 296-330 are IIA; it reads RMLARYEKWEKIKQHYQHWSDSLSEEGRGLLKKLQ. 5 repeat units span residues 315–333, 342–357, 360–378, 380–397, and 399–416. Positions 315–416 are 5 X approximate repeats; the sequence is SDSLSEEGRG…EFLKKLKLDI (102 aa). The interval 336-416 is III; that stretch reads KKDDIIHSLS…EFLKKLKLDI (81 aa). Residues 420-583 form an IIB region; the sequence is DINQRLQDTG…EYIRIDAKVV (164 aa). The IV stretch occupies residues 585-809; sequence KSKIDTKIQE…NDQIKFIINS (225 aa). The ATLF-like 2 domain maps to 609-804; the sequence is LPKYTKLITF…TFQFINDQIK (196 aa). Position 719 (His-719) interacts with Zn(2+). Glu-720 (proton acceptor) is an active-site residue. Zn(2+) contacts are provided by His-723, Tyr-761, and Glu-768.

The protein belongs to the peptidase M34 family. As to quaternary structure, interacts (via ATLF domain 1) with the cleaved form of protective antigen (PA-63) anthrax toxin; interaction is required for LF translocation into the host cytoplasm. Interacts with PA-63 homooligomers (either homoheptamers or homooctamers): three molecules of LF bind the PA-63 homoheptamer to form the PA(7)LF(3) complex, in which the relative position of the N-terminal alpha-helices in the three LFs determines which factor is translocated first. Zn(2+) is required as a cofactor.

It is found in the secreted. Its subcellular location is the host cytoplasm. It localises to the host cytosol. The enzyme catalyses Preferred amino acids around the cleavage site can be denoted BBBBxHx-|-H, in which B denotes Arg or Lys, H denotes a hydrophobic amino acid, and x is any amino acid. The only known protein substrates are mitogen-activated protein (MAP) kinase kinases.. With respect to regulation, inhibited by NSC-12155 (1,3-Bis(2-methyl-4-aminoquinoline-6-yl)ure). Inhibited by phenoxyacetic acid bearing alpha-benzyl substituents on the C2-side chain. Inhibited by sulfonamide hydroxamate with benzylic additions at the sulfonamide nitrogen. Also inhibited by sulfonamide hydroxamates with alkylation at the sulfonamide nitrogen. Inhibited by hydroxamic acid inhibitors. Lethal factor (LF), which constitutes one of the three proteins composing the anthrax toxin, is able to trigger rapid cell death in macrophages. Acts as a protease that cleaves the N-terminal of most dual specificity mitogen-activated protein kinase kinases (MAPKKs or MAP2Ks) (except for MAP2K5): cleavage invariably occurs within the N-terminal proline-rich region preceding the kinase domain, thus disrupting a sequence involved in directing specific protein-protein interactions necessary for the assembly of signaling complexes. Also cleaves mouse Nlrp1b: host Nlrp1b cleavage promotes ubiquitination and degradation of the N-terminal part of Nlrp1b by the proteasome, thereby releasing the cleaved C-terminal part of Nlrp1b, which polymerizes and forms the Nlrp1b inflammasome followed by host cell pyroptosis. Able to cleave mouse Nlrp1b alleles 1 and 5, while it is not able to cleave Nlrp1b alleles 2, 3 and 4. In contrast, does not cleave NLRP1 human ortholog. LF is not toxic by itself and only acts as a lethal factor when associated with protective antigen (PA) to form the lethal toxin (LeTx): PA is required for LF translocation into the host cytosol. This chain is Lethal factor, found in Bacillus anthracis.